A 510-amino-acid chain; its full sequence is NAD(P)H-quinone oxidoreductase subunit 2, chloroplastic (510 aa).

11 consecutive transmembrane segments (helical) span residues 24–44 (LLLF…GLIL), 59–79 (WFYF…LFRW), 99–119 (IFQF…VEYI), 124–144 (MAIT…MFLC), 149–169 (LITI…LSGY), 183–203 (YLLM…WLYG), 295–315 (WHLL…LIAI), 323–343 (MLAY…IVGD), 347–367 (GYAS…GTFA), 395–415 (ALSS…AGFF), and 418–438 (LYLF…IGLL).

This sequence belongs to the complex I subunit 2 family. As to quaternary structure, NDH is composed of at least 16 different subunits, 5 of which are encoded in the nucleus.

The protein resides in the plastid. It localises to the chloroplast thylakoid membrane. It catalyses the reaction a plastoquinone + NADH + (n+1) H(+)(in) = a plastoquinol + NAD(+) + n H(+)(out). It carries out the reaction a plastoquinone + NADPH + (n+1) H(+)(in) = a plastoquinol + NADP(+) + n H(+)(out). Functionally, NDH shuttles electrons from NAD(P)H:plastoquinone, via FMN and iron-sulfur (Fe-S) centers, to quinones in the photosynthetic chain and possibly in a chloroplast respiratory chain. The immediate electron acceptor for the enzyme in this species is believed to be plastoquinone. Couples the redox reaction to proton translocation, and thus conserves the redox energy in a proton gradient. The polypeptide is NAD(P)H-quinone oxidoreductase subunit 2, chloroplastic (Asparagus officinalis (Garden asparagus)).